Consider the following 78-residue polypeptide: Acyl carrier protein AcpP (78 aa).

The 76-residue stretch at 2–77 folds into the Carrier domain; it reads SDIAERVKKI…DAVKFIEKAQ (76 aa). Position 37 is an O-(pantetheine 4'-phosphoryl)serine (Ser37).

The protein belongs to the acyl carrier protein (ACP) family. Post-translationally, 4'-phosphopantetheine is transferred from CoA to a specific serine of apo-ACP by AcpS. This modification is essential for activity because fatty acids are bound in thioester linkage to the sulfhydryl of the prosthetic group.

Its subcellular location is the cytoplasm. It participates in lipid metabolism; fatty acid biosynthesis. Functionally, carrier of the growing fatty acid chain in fatty acid biosynthesis. The polypeptide is Acyl carrier protein AcpP (Agrobacterium fabrum (strain C58 / ATCC 33970) (Agrobacterium tumefaciens (strain C58))).